Here is a 400-residue protein sequence, read N- to C-terminus: Phosphoglycerate kinase (400 aa).

Residues 23-25 (DLN), Arg38, 61-64 (HFGR), Arg120, and Arg153 contribute to the substrate site. ATP-binding positions include Lys203, Glu325, and 355–358 (GGDT).

Belongs to the phosphoglycerate kinase family. As to quaternary structure, monomer.

The protein localises to the cytoplasm. It carries out the reaction (2R)-3-phosphoglycerate + ATP = (2R)-3-phospho-glyceroyl phosphate + ADP. Its pathway is carbohydrate degradation; glycolysis; pyruvate from D-glyceraldehyde 3-phosphate: step 2/5. In Agrobacterium fabrum (strain C58 / ATCC 33970) (Agrobacterium tumefaciens (strain C58)), this protein is Phosphoglycerate kinase.